Here is a 259-residue protein sequence, read N- to C-terminus: Ribonuclease HII (259 aa).

One can recognise an RNase H type-2 domain in the interval 70–258 (TLIAGIDEVG…VKSLVLGKKE (189 aa)). Residues Asp-76, Glu-77, and Asp-168 each coordinate a divalent metal cation.

The protein belongs to the RNase HII family. Mn(2+) is required as a cofactor. It depends on Mg(2+) as a cofactor.

The protein resides in the cytoplasm. The enzyme catalyses Endonucleolytic cleavage to 5'-phosphomonoester.. Its function is as follows. Endonuclease that specifically degrades the RNA of RNA-DNA hybrids. The protein is Ribonuclease HII of Streptococcus pneumoniae (strain 70585).